Reading from the N-terminus, the 220-residue chain is Putative glutathione S-transferase C460.02c (220 aa).

Positions 1 to 81 constitute a GST N-terminal domain; the sequence is MFLGTIYSFK…YFYEKGKHND (81 aa). In terms of domain architecture, GST C-terminal spans 89 to 216; sequence NEIEEAEMLK…YPLELPLTVT (128 aa).

Belongs to the GST superfamily.

The protein resides in the cytoplasm. The enzyme catalyses RX + glutathione = an S-substituted glutathione + a halide anion + H(+). Functionally, involved in the oxidative stress response and detoxification. The protein is Putative glutathione S-transferase C460.02c of Schizosaccharomyces pombe (strain 972 / ATCC 24843) (Fission yeast).